Here is a 157-residue protein sequence, read N- to C-terminus: Ribosome maturation factor RimP (157 aa).

This sequence belongs to the RimP family.

The protein resides in the cytoplasm. Functionally, required for maturation of 30S ribosomal subunits. The protein is Ribosome maturation factor RimP of Limosilactobacillus reuteri (strain DSM 20016) (Lactobacillus reuteri).